The primary structure comprises 112 residues: T cell receptor alpha variable 9-2 (112 aa).

An N-terminal signal peptide occupies residues Met1–Gly20. An Ig-like domain is found at Asp21–Ser112. Asn41 is a glycosylation site (N-linked (GlcNAc...) asparagine). Cysteines 42 and 109 form a disulfide.

As to quaternary structure, alpha-beta TR is a heterodimer composed of an alpha and beta chain; disulfide-linked. The alpha-beta TR is associated with the transmembrane signaling CD3 coreceptor proteins to form the TR-CD3 (TcR or TCR). The assembly of alpha-beta TR heterodimers with CD3 occurs in the endoplasmic reticulum where a single alpha-beta TR heterodimer associates with one CD3D-CD3E heterodimer, one CD3G-CD3E heterodimer and one CD247 homodimer forming a stable octameric structure. CD3D-CD3E and CD3G-CD3E heterodimers preferentially associate with TR alpha and TR beta chains, respectively. The association of the CD247 homodimer is the last step of TcR assembly in the endoplasmic reticulum and is required for transport to the cell surface.

The protein resides in the cell membrane. V region of the variable domain of T cell receptor (TR) alpha chain that participates in the antigen recognition. Alpha-beta T cell receptors are antigen specific receptors which are essential to the immune response and are present on the cell surface of T lymphocytes. Recognize peptide-major histocompatibility (MH) (pMH) complexes that are displayed by antigen presenting cells (APC), a prerequisite for efficient T cell adaptive immunity against pathogens. Binding of alpha-beta TR to pMH complex initiates TR-CD3 clustering on the cell surface and intracellular activation of LCK that phosphorylates the ITAM motifs of CD3G, CD3D, CD3E and CD247 enabling the recruitment of ZAP70. In turn ZAP70 phosphorylates LAT, which recruits numerous signaling molecules to form the LAT signalosome. The LAT signalosome propagates signal branching to three major signaling pathways, the calcium, the mitogen-activated protein kinase (MAPK) kinase and the nuclear factor NF-kappa-B (NF-kB) pathways, leading to the mobilization of transcription factors that are critical for gene expression and essential for T cell growth and differentiation. The T cell repertoire is generated in the thymus, by V-(D)-J rearrangement. This repertoire is then shaped by intrathymic selection events to generate a peripheral T cell pool of self-MH restricted, non-autoaggressive T cells. Post-thymic interaction of alpha-beta TR with the pMH complexes shapes TR structural and functional avidity. In Homo sapiens (Human), this protein is T cell receptor alpha variable 9-2.